The chain runs to 156 residues: 6,7-dimethyl-8-ribityllumazine synthase (156 aa).

5-amino-6-(D-ribitylamino)uracil-binding positions include phenylalanine 28, 62-64, and 86-88; these read ALE and AVI. Residue 91 to 92 coordinates (2S)-2-hydroxy-3-oxobutyl phosphate; that stretch reads ET. The active-site Proton donor is the histidine 94. Asparagine 119 contacts 5-amino-6-(D-ribitylamino)uracil. Arginine 133 contacts (2S)-2-hydroxy-3-oxobutyl phosphate.

This sequence belongs to the DMRL synthase family.

The enzyme catalyses (2S)-2-hydroxy-3-oxobutyl phosphate + 5-amino-6-(D-ribitylamino)uracil = 6,7-dimethyl-8-(1-D-ribityl)lumazine + phosphate + 2 H2O + H(+). It functions in the pathway cofactor biosynthesis; riboflavin biosynthesis; riboflavin from 2-hydroxy-3-oxobutyl phosphate and 5-amino-6-(D-ribitylamino)uracil: step 1/2. Functionally, catalyzes the formation of 6,7-dimethyl-8-ribityllumazine by condensation of 5-amino-6-(D-ribitylamino)uracil with 3,4-dihydroxy-2-butanone 4-phosphate. This is the penultimate step in the biosynthesis of riboflavin. In Azoarcus sp. (strain BH72), this protein is 6,7-dimethyl-8-ribityllumazine synthase.